Consider the following 186-residue polypeptide: MKTAQELRVGNVVMIGTDAMVVLKAEYSRSGRNSSVVKMKFKNLLTGAPNEGVFKADDKFDVVILDKKECTYSYFADPMYVFMDTEYNQYEVEAEFMGDALNYLEESMPCEVVFYEGKALSVAMPNSLVREIIYTEPAVKGDTSSGKVLKNAKLATGYELQVPLFCNTGDKIEIDTRTGEYRSRAN.

This sequence belongs to the elongation factor P family.

The protein localises to the cytoplasm. Its pathway is protein biosynthesis; polypeptide chain elongation. Involved in peptide bond synthesis. Stimulates efficient translation and peptide-bond synthesis on native or reconstituted 70S ribosomes in vitro. Probably functions indirectly by altering the affinity of the ribosome for aminoacyl-tRNA, thus increasing their reactivity as acceptors for peptidyl transferase. The sequence is that of Elongation factor P from Polynucleobacter asymbioticus (strain DSM 18221 / CIP 109841 / QLW-P1DMWA-1) (Polynucleobacter necessarius subsp. asymbioticus).